The primary structure comprises 691 residues: DNA ligase (691 aa).

NAD(+)-binding positions include 36 to 40 (DAEYD), 85 to 86 (SL), and E118. The active-site N6-AMP-lysine intermediate is K120. NAD(+) contacts are provided by R141, E178, K295, and K319. Positions 413, 416, 431, and 437 each coordinate Zn(2+). The region spanning 595-684 (GRPQPLAGQT…ESASSEDAQP (90 aa)) is the BRCT domain.

The protein belongs to the NAD-dependent DNA ligase family. LigA subfamily. The cofactor is Mg(2+). It depends on Mn(2+) as a cofactor.

The enzyme catalyses NAD(+) + (deoxyribonucleotide)n-3'-hydroxyl + 5'-phospho-(deoxyribonucleotide)m = (deoxyribonucleotide)n+m + AMP + beta-nicotinamide D-nucleotide.. Its function is as follows. DNA ligase that catalyzes the formation of phosphodiester linkages between 5'-phosphoryl and 3'-hydroxyl groups in double-stranded DNA using NAD as a coenzyme and as the energy source for the reaction. It is essential for DNA replication and repair of damaged DNA. The sequence is that of DNA ligase from Chromohalobacter salexigens (strain ATCC BAA-138 / DSM 3043 / CIP 106854 / NCIMB 13768 / 1H11).